The following is a 61-amino-acid chain: Photosystem II reaction center protein K (61 aa).

A propeptide spanning residues Met1–Ala24 is cleaved from the precursor. A helical membrane pass occupies residues Phe32 to Leu52.

The protein belongs to the PsbK family. PSII is composed of 1 copy each of membrane proteins PsbA, PsbB, PsbC, PsbD, PsbE, PsbF, PsbH, PsbI, PsbJ, PsbK, PsbL, PsbM, PsbT, PsbX, PsbY, PsbZ, Psb30/Ycf12, at least 3 peripheral proteins of the oxygen-evolving complex and a large number of cofactors. It forms dimeric complexes.

The protein localises to the plastid. Its subcellular location is the chloroplast thylakoid membrane. In terms of biological role, one of the components of the core complex of photosystem II (PSII). PSII is a light-driven water:plastoquinone oxidoreductase that uses light energy to abstract electrons from H(2)O, generating O(2) and a proton gradient subsequently used for ATP formation. It consists of a core antenna complex that captures photons, and an electron transfer chain that converts photonic excitation into a charge separation. The polypeptide is Photosystem II reaction center protein K (Drimys granadensis).